Reading from the N-terminus, the 244-residue chain is Uridylate kinase (244 aa).

ATP is bound at residue lysine 11–glycine 14. Residues glycine 19 to glycine 24 are involved in allosteric activation by GTP. A UMP-binding site is contributed by glycine 53. The ATP site is built by glycine 54 and arginine 58. Residues aspartate 73 and serine 134–threonine 141 contribute to the UMP site. Residues threonine 161, tyrosine 167, and aspartate 170 each coordinate ATP.

It belongs to the UMP kinase family. As to quaternary structure, homohexamer.

Its subcellular location is the cytoplasm. It carries out the reaction UMP + ATP = UDP + ADP. The protein operates within pyrimidine metabolism; CTP biosynthesis via de novo pathway; UDP from UMP (UMPK route): step 1/1. Allosterically activated by GTP. Inhibited by UTP. In terms of biological role, catalyzes the reversible phosphorylation of UMP to UDP. The polypeptide is Uridylate kinase (Trichodesmium erythraeum (strain IMS101)).